The primary structure comprises 181 residues: ATP synthase subunit delta (181 aa).

This sequence belongs to the ATPase delta chain family. As to quaternary structure, F-type ATPases have 2 components, F(1) - the catalytic core - and F(0) - the membrane proton channel. F(1) has five subunits: alpha(3), beta(3), gamma(1), delta(1), epsilon(1). F(0) has three main subunits: a(1), b(2) and c(10-14). The alpha and beta chains form an alternating ring which encloses part of the gamma chain. F(1) is attached to F(0) by a central stalk formed by the gamma and epsilon chains, while a peripheral stalk is formed by the delta and b chains.

The protein localises to the cell inner membrane. F(1)F(0) ATP synthase produces ATP from ADP in the presence of a proton or sodium gradient. F-type ATPases consist of two structural domains, F(1) containing the extramembraneous catalytic core and F(0) containing the membrane proton channel, linked together by a central stalk and a peripheral stalk. During catalysis, ATP synthesis in the catalytic domain of F(1) is coupled via a rotary mechanism of the central stalk subunits to proton translocation. In terms of biological role, this protein is part of the stalk that links CF(0) to CF(1). It either transmits conformational changes from CF(0) to CF(1) or is implicated in proton conduction. The sequence is that of ATP synthase subunit delta from Cupriavidus taiwanensis (strain DSM 17343 / BCRC 17206 / CCUG 44338 / CIP 107171 / LMG 19424 / R1) (Ralstonia taiwanensis (strain LMG 19424)).